The primary structure comprises 285 residues: Aspartate/glutamate leucyltransferase (285 aa).

This sequence belongs to the R-transferase family. Bpt subfamily.

It localises to the cytoplasm. The enzyme catalyses N-terminal L-glutamyl-[protein] + L-leucyl-tRNA(Leu) = N-terminal L-leucyl-L-glutamyl-[protein] + tRNA(Leu) + H(+). The catalysed reaction is N-terminal L-aspartyl-[protein] + L-leucyl-tRNA(Leu) = N-terminal L-leucyl-L-aspartyl-[protein] + tRNA(Leu) + H(+). Functions in the N-end rule pathway of protein degradation where it conjugates Leu from its aminoacyl-tRNA to the N-termini of proteins containing an N-terminal aspartate or glutamate. The sequence is that of Aspartate/glutamate leucyltransferase from Dinoroseobacter shibae (strain DSM 16493 / NCIMB 14021 / DFL 12).